The following is a 258-amino-acid chain: Cholera enterotoxin subunit A (258 aa).

The first 18 residues, 1–18, serve as a signal peptide directing secretion; that stretch reads MVKIIFVFFIFLSSFSYA. Residues 25–28 and 41–43 each bind NAD(+); these read RADS and MPR. E130 is an active-site residue. A disulfide bridge links C205 with C217.

Belongs to the enterotoxin A family. As to quaternary structure, the holotoxin (choleragen) consists of a pentameric ring of B subunits whose central pore is occupied by the A subunit. The A subunit contains two chains, A1 and A2, linked by a disulfide bridge. Interaction with the host protein ARF6 causes a conformation change so that the enterotoxin subunit A1 can bind NAD and catalyze the ADP-ribosylation of the host Gs alpha.

The A1 chain catalyzes the ADP-ribosylation of Gs alpha, a GTP-binding regulatory protein, to activate the adenylate cyclase. This leads to an overproduction of cAMP and eventually to a hypersecretion of chloride and bicarbonate followed by water, resulting in the characteristic cholera stool. The A2 chain tethers A1 to the pentameric ring. This chain is Cholera enterotoxin subunit A (ctxA), found in Vibrio cholerae serotype O1 (strain ATCC 39315 / El Tor Inaba N16961).